Reading from the N-terminus, the 182-residue chain is UPF0398 protein RBAM_020340 (182 aa).

Belongs to the UPF0398 family.

The chain is UPF0398 protein RBAM_020340 from Bacillus velezensis (strain DSM 23117 / BGSC 10A6 / LMG 26770 / FZB42) (Bacillus amyloliquefaciens subsp. plantarum).